A 550-amino-acid chain; its full sequence is Methionine--tRNA ligase (550 aa).

The short motif at 10-22 (LPYPNNSSPHLGN) is the 'HIGH' region element. Residues 336–340 (KFSKS) carry the 'KMSKS' region motif. Residue lysine 339 coordinates ATP.

This sequence belongs to the class-I aminoacyl-tRNA synthetase family.

It catalyses the reaction tRNA(Met) + L-methionine + ATP = L-methionyl-tRNA(Met) + AMP + diphosphate. The polypeptide is Methionine--tRNA ligase (MARS) (Acanthamoeba polyphaga mimivirus (APMV)).